A 164-amino-acid chain; its full sequence is 2S seed storage protein 3 (164 aa).

The N-terminal stretch at 1 to 21 is a signal peptide; that stretch reads MANKLFLVCATLALCFLLTNA. 2 propeptides span residues 22–37 and 73–81; these read SIYR…DASN and GPSLDDEFD.

Belongs to the 2S seed storage albumins family. The mature protein consists of a small and a large chain linked by disulfide bonds. Interacts with AHK2.

Functionally, this is a 2S seed storage protein. The chain is 2S seed storage protein 3 (AT2S3) from Arabidopsis thaliana (Mouse-ear cress).